The chain runs to 297 residues: MLDNKDIATPSRMRALLDKYGFNFKKSLGQNFLIDVNIINNIIDASDIDAQTGVIEIGPGMGSLTEQLARHAKRVLAFEIDQRLIPVLNDTLSPYDNVTVINEDILKANIKEAVENHLQDCEKIMVVANLPYYITTPILLNLMQQDIPIDGYVVMMQKEVGERLNAEVGSKAYGSLSIVVQYYTETSKVLTVPKSVFMPPPNVDSIVVKLMQRTEPLVTVDNEEAFFKLAKAAFAQRRKTINNNYQNYFKDGKQHKEVILQWLEQAGIDPRRRGETLSIQDFAKLYEEKKKFPQLEN.

The S-adenosyl-L-methionine site is built by Asn-31, Leu-33, Gly-58, Glu-79, Asp-104, and Asn-129.

Belongs to the class I-like SAM-binding methyltransferase superfamily. rRNA adenine N(6)-methyltransferase family. RsmA subfamily.

The protein localises to the cytoplasm. The catalysed reaction is adenosine(1518)/adenosine(1519) in 16S rRNA + 4 S-adenosyl-L-methionine = N(6)-dimethyladenosine(1518)/N(6)-dimethyladenosine(1519) in 16S rRNA + 4 S-adenosyl-L-homocysteine + 4 H(+). Its function is as follows. Specifically dimethylates two adjacent adenosines (A1518 and A1519) in the loop of a conserved hairpin near the 3'-end of 16S rRNA in the 30S particle. May play a critical role in biogenesis of 30S subunits. The chain is Ribosomal RNA small subunit methyltransferase A from Staphylococcus aureus (strain bovine RF122 / ET3-1).